A 72-amino-acid chain; its full sequence is Translation initiation factor IF-1 2 (72 aa).

In terms of domain architecture, S1-like spans 1-72; it reads MAKDDVIQMQ…SRARIVFRTK (72 aa).

This sequence belongs to the IF-1 family. As to quaternary structure, component of the 30S ribosomal translation pre-initiation complex which assembles on the 30S ribosome in the order IF-2 and IF-3, IF-1 and N-formylmethionyl-tRNA(fMet); mRNA recruitment can occur at any time during PIC assembly.

The protein resides in the cytoplasm. One of the essential components for the initiation of protein synthesis. Stabilizes the binding of IF-2 and IF-3 on the 30S subunit to which N-formylmethionyl-tRNA(fMet) subsequently binds. Helps modulate mRNA selection, yielding the 30S pre-initiation complex (PIC). Upon addition of the 50S ribosomal subunit IF-1, IF-2 and IF-3 are released leaving the mature 70S translation initiation complex. The protein is Translation initiation factor IF-1 2 of Cupriavidus metallidurans (strain ATCC 43123 / DSM 2839 / NBRC 102507 / CH34) (Ralstonia metallidurans).